Consider the following 96-residue polypeptide: Small ribosomal subunit protein bS6 (96 aa).

This sequence belongs to the bacterial ribosomal protein bS6 family.

Its function is as follows. Binds together with bS18 to 16S ribosomal RNA. The polypeptide is Small ribosomal subunit protein bS6 (Mycobacteroides abscessus (strain ATCC 19977 / DSM 44196 / CCUG 20993 / CIP 104536 / JCM 13569 / NCTC 13031 / TMC 1543 / L948) (Mycobacterium abscessus)).